Here is a 466-residue protein sequence, read N- to C-terminus: Phosphoenolpyruvate carboxykinase (ATP) (466 aa).

Substrate-binding residues include Arg-61, Tyr-196, and Lys-202. ATP is bound by residues Lys-202, His-221, and 237–245 (GLSGTGKTT). Positions 202 and 221 each coordinate Mn(2+). Asp-258 is a Mn(2+) binding site. Glu-286, Arg-323, and Thr-448 together coordinate ATP. Arg-323 lines the substrate pocket.

This sequence belongs to the phosphoenolpyruvate carboxykinase (ATP) family. Mn(2+) is required as a cofactor.

The protein localises to the cytoplasm. The catalysed reaction is oxaloacetate + ATP = phosphoenolpyruvate + ADP + CO2. It functions in the pathway carbohydrate biosynthesis; gluconeogenesis. In terms of biological role, involved in the gluconeogenesis. Catalyzes the conversion of oxaloacetate (OAA) to phosphoenolpyruvate (PEP) through direct phosphoryl transfer between the nucleoside triphosphate and OAA. In Deinococcus radiodurans (strain ATCC 13939 / DSM 20539 / JCM 16871 / CCUG 27074 / LMG 4051 / NBRC 15346 / NCIMB 9279 / VKM B-1422 / R1), this protein is Phosphoenolpyruvate carboxykinase (ATP).